A 447-amino-acid polypeptide reads, in one-letter code: 23S rRNA (uracil(1939)-C(5))-methyltransferase RlmD (447 aa).

A TRAM domain is found at 7-66; the sequence is RKPLSQEPQKASIEALTHEGRGIAHVAGKTVFIDGALPGETVWFHYLRRRGKFDEGRVLE. [4Fe-4S] cluster-binding residues include C79, C85, C88, and C168. Q275, F304, N309, E325, D352, and D374 together coordinate S-adenosyl-L-methionine. The active-site Nucleophile is the C400.

Belongs to the class I-like SAM-binding methyltransferase superfamily. RNA M5U methyltransferase family. RlmD subfamily.

It catalyses the reaction uridine(1939) in 23S rRNA + S-adenosyl-L-methionine = 5-methyluridine(1939) in 23S rRNA + S-adenosyl-L-homocysteine + H(+). In terms of biological role, catalyzes the formation of 5-methyl-uridine at position 1939 (m5U1939) in 23S rRNA. This Nitrosococcus oceani (strain ATCC 19707 / BCRC 17464 / JCM 30415 / NCIMB 11848 / C-107) protein is 23S rRNA (uracil(1939)-C(5))-methyltransferase RlmD.